Here is a 183-residue protein sequence, read N- to C-terminus: Inner membrane-spanning protein YciB (183 aa).

5 consecutive transmembrane segments (helical) span residues 19-39 (LYGVQQAAITLVIATVIQLIV), 53-73 (IMGIFVVFFGILTAYFNDLNF), 76-96 (WKVTIINGLFAAVLLVSQFVF), 121-141 (LGWAGFFIICMLLNIVISYYF), and 151-171 (TFGFTGLSLIAAIATGVYLYP).

The protein belongs to the YciB family.

The protein localises to the cell inner membrane. Its function is as follows. Plays a role in cell envelope biogenesis, maintenance of cell envelope integrity and membrane homeostasis. The chain is Inner membrane-spanning protein YciB from Actinobacillus pleuropneumoniae serotype 7 (strain AP76).